The primary structure comprises 152 residues: ASP external chaperone (152 aa).

A signal peptide spans 1–22; it reads MNKPVTLLLATLLAPLSGQLCA.

Forms a complex with the serine protease ASP in the periplasm. After translocation of the ASP-ORF2 complex from the periplasm to the extracellular space, the complex is dissociated in a pH-dependent manner.

The protein localises to the periplasm. It localises to the secreted. Degraded by ASP after secretion and dissociation of the ASP-ORF2 complex. Its function is as follows. Required for the production of the active form of the Aeromonas extracellular serine protease (ASP). Acts as a chaperone that helps ASP form an active structure in the periplasm. Formation of a complex with ASP in the periplasm also inactivates the protease activity and likely protects ASP from intrinsic proteases. Dissociation of the ASP-ORF2 complex after secretion in the extracellular space generates an active ASP. The chain is ASP external chaperone from Aeromonas sobria.